The chain runs to 61 residues: Small ribosomal subunit protein uS14 (61 aa).

The Zn(2+) site is built by Cys-24, Cys-27, Cys-40, and Cys-43.

This sequence belongs to the universal ribosomal protein uS14 family. Zinc-binding uS14 subfamily. As to quaternary structure, part of the 30S ribosomal subunit. Contacts proteins S3 and S10. Zn(2+) serves as cofactor.

Its function is as follows. Binds 16S rRNA, required for the assembly of 30S particles and may also be responsible for determining the conformation of the 16S rRNA at the A site. This is Small ribosomal subunit protein uS14 from Kosmotoga olearia (strain ATCC BAA-1733 / DSM 21960 / TBF 19.5.1).